Consider the following 385-residue polypeptide: Isocitrate dehydrogenase [NAD] subunit beta, mitochondrial (385 aa).

A mitochondrion-targeting transit peptide spans 1–34 (MAALSGVRWLTRALVSAGNPGAWRGLSTSAAAHA). N6-acetyllysine is present on Lys-199.

Belongs to the isocitrate and isopropylmalate dehydrogenases family. As to quaternary structure, heterooligomer of subunits alpha (IDH3A), beta (IDH3B), and gamma (IDH3G) in the apparent ratio of 2:1:1. The heterodimer containing one IDH3A and one IDH3B subunit and the heterodimer containing one IDH3A and one IDH3G subunit assemble into a heterotetramer (which contains two subunits of IDH3A, one of IDH3B and one of IDH3G) and further into the heterooctamer.

The protein localises to the mitochondrion. The heterotetramer and the heterodimer composed of IDH3A and IDH3G subunits can be allosterically activated by citrate (CIT) or/and ADP, and the two activators can act independently or synergistically. The heterodimer composed of IDH3A and IDH3B subunits cannot be allosterically regulated and the allosteric regulation of the heterotetramer is through the IDH3G subunit and not the IDH3B subunit. The IDH3G subunit contains the allosteric site which consists of a CIT-binding site and an ADP-binding site, and the binding of CIT and ADP causes conformational changes at the allosteric site which are transmitted to the active site in the catalytic subunit (IDH3A) through a cascade of conformational changes at the heterodimer interface, leading to stabilization of the isocitrate-binding at the active site and thus activation of the enzyme. ATP can activate the heterotetramer and the heterodimer composed of IDH3A and IDH3G subunits at low concentrations but inhibits their activities at high concentrations, whereas ATP exhibits only inhibitory effect on the heterodimer composed of IDH3A and IDH3B subunits. Functionally, plays a structural role to facilitate the assembly and ensure the full activity of the enzyme catalyzing the decarboxylation of isocitrate (ICT) into alpha-ketoglutarate. The heterodimer composed of the alpha (IDH3A) and beta (IDH3B) subunits and the heterodimer composed of the alpha (IDH3A) and gamma (IDH3G) subunits, have considerable basal activity but the full activity of the heterotetramer (containing two subunits of IDH3A, one of IDH3B and one of IDH3G) requires the assembly and cooperative function of both heterodimers. The polypeptide is Isocitrate dehydrogenase [NAD] subunit beta, mitochondrial (IDH3B) (Homo sapiens (Human)).